A 312-amino-acid polypeptide reads, in one-letter code: Salivary protein SG34 (312 aa).

The first 20 residues, 1–20 (MSPSKKILVLLLFPILLVSS), serve as a signal peptide directing secretion. Residues 95 to 158 (NMEVQLLRES…QEEIEEQTKQ (64 aa)) are a coiled coil.

This sequence belongs to the salivary protein SG34 family. In terms of tissue distribution, female salivary gland (at protein level). Low-level expression in ovary.

Functionally, possible serine protease. (Microbial infection) Modulates replication of duck Tembusu virus in salivary glands and virus release into the saliva, probably via the regulation of antimicrobial peptides expression in response to virus infection. Its function is as follows. (Microbial infection) Enhances replication of dengue virus type 2 in human keratinocytes, probably by suppressing the production of type I interferons and antimicrobial peptides in response to virus infection. The polypeptide is Salivary protein SG34 (Aedes aegypti (Yellowfever mosquito)).